The following is a 224-amino-acid chain: EEF1A lysine methyltransferase 3 (224 aa).

S-adenosyl-L-methionine is bound by residues Trp58, 84–86, Asp105, Trp134, and Ala151; that span reads GAG.

This sequence belongs to the methyltransferase superfamily. METTL21 family.

The protein localises to the cytoplasm. Its subcellular location is the cytoskeleton. The protein resides in the microtubule organizing center. It localises to the centrosome. The enzyme catalyses L-lysyl-[protein] + 3 S-adenosyl-L-methionine = N(6),N(6),N(6)-trimethyl-L-lysyl-[protein] + 3 S-adenosyl-L-homocysteine + 3 H(+). The catalysed reaction is L-lysyl-[protein] + S-adenosyl-L-methionine = N(6)-methyl-L-lysyl-[protein] + S-adenosyl-L-homocysteine + H(+). It catalyses the reaction N(6)-methyl-L-lysyl-[protein] + S-adenosyl-L-methionine = N(6),N(6)-dimethyl-L-lysyl-[protein] + S-adenosyl-L-homocysteine + H(+). It carries out the reaction N(6),N(6)-dimethyl-L-lysyl-[protein] + S-adenosyl-L-methionine = N(6),N(6),N(6)-trimethyl-L-lysyl-[protein] + S-adenosyl-L-homocysteine + H(+). Functionally, protein-lysine methyltransferase that selectively mono-, di- and trimethylates 'Lys-165' of the translation elongation factors EEF1A1 and EEF1A2 in an aminoacyl-tRNA and GTP-dependent manner. EEF1A1 methylation by EEF1AKMT3 is dynamic as well as inducible by stress conditions, such as ER-stress, and plays a regulatory role on mRNA translation. This is EEF1A lysine methyltransferase 3 from Xenopus tropicalis (Western clawed frog).